The sequence spans 476 residues: Glycogen synthase (476 aa).

ADP-alpha-D-glucose is bound at residue K15.

Belongs to the glycosyltransferase 1 family. Bacterial/plant glycogen synthase subfamily.

The enzyme catalyses [(1-&gt;4)-alpha-D-glucosyl](n) + ADP-alpha-D-glucose = [(1-&gt;4)-alpha-D-glucosyl](n+1) + ADP + H(+). Its pathway is glycan biosynthesis; glycogen biosynthesis. Its function is as follows. Synthesizes alpha-1,4-glucan chains using ADP-glucose. This is Glycogen synthase from Yersinia pestis bv. Antiqua (strain Antiqua).